The chain runs to 512 residues: Aldehyde dehydrogenase B (512 aa).

Residues Glu-268 and Cys-307 contribute to the active site.

In terms of assembly, homotetramer.

It catalyses the reaction an aldehyde + NADP(+) + H2O = a carboxylate + NADPH + 2 H(+). The catalysed reaction is acetaldehyde + NADP(+) + H2O = acetate + NADPH + 2 H(+). The enzyme catalyses chloroacetaldehyde + NADP(+) + H2O = chloroacetate + NADPH + 2 H(+). It carries out the reaction propanal + NADP(+) + H2O = propanoate + NADPH + 2 H(+). Its activity is regulated as follows. Magnesium increases enzyme activity with various substrates. Its function is as follows. Catalyzes the NADP(+)-dependent oxidation of diverse aldehydes to their corresponding carboxylic acids, with a preference for acetaldehyde and chloroacetaldehyde. May play a role in detoxifying aldehydes present during stationary phase. Cannot use NAD(+) instead of NADP(+) as the electron acceptor. To a lesser extent is also able to oxidize propionaldehyde (propanal), benzaldehyde, mafosfamide, and 4-hydroperoxycyclophosphamide. Does not use either glyceraldehyde or glycolaldehyde as substrates. This Escherichia coli (strain K12) protein is Aldehyde dehydrogenase B.